We begin with the raw amino-acid sequence, 95 residues long: Small ribosomal subunit protein uS15 (95 aa).

It belongs to the universal ribosomal protein uS15 family. Part of the 30S ribosomal subunit. Forms a bridge to the 50S subunit in the 70S ribosome, contacting the 23S rRNA.

In terms of biological role, one of the primary rRNA binding proteins, it binds directly to 16S rRNA where it helps nucleate assembly of the platform of the 30S subunit by binding and bridging several RNA helices of the 16S rRNA. Forms an intersubunit bridge (bridge B4) with the 23S rRNA of the 50S subunit in the ribosome. The sequence is that of Small ribosomal subunit protein uS15 from Streptomyces avermitilis (strain ATCC 31267 / DSM 46492 / JCM 5070 / NBRC 14893 / NCIMB 12804 / NRRL 8165 / MA-4680).